Here is a 397-residue protein sequence, read N- to C-terminus: Protein Mx1 (397 aa).

This sequence belongs to the TRAFAC class dynamin-like GTPase superfamily. Dynamin/Fzo/YdjA family.

This is Protein Mx1 (Mx1) from Mus musculus (Mouse).